We begin with the raw amino-acid sequence, 315 residues long: Acyl transferase (315 aa).

Catalysis depends on charge relay system residues serine 116, aspartate 213, and histidine 243.

It belongs to the LuxD family.

The protein operates within lipid metabolism; fatty acid reduction for biolumincescence. Acyl transferase is part of the fatty acid reductase system required for aldehyde biosynthesis; it produces fatty acids for the luminescent reaction. The sequence is that of Acyl transferase from Photobacterium leiognathi.